Reading from the N-terminus, the 94-residue chain is Phosphoribosyl-ATP pyrophosphatase (94 aa).

Belongs to the PRA-PH family.

The protein resides in the cytoplasm. The catalysed reaction is 1-(5-phospho-beta-D-ribosyl)-ATP + H2O = 1-(5-phospho-beta-D-ribosyl)-5'-AMP + diphosphate + H(+). It functions in the pathway amino-acid biosynthesis; L-histidine biosynthesis; L-histidine from 5-phospho-alpha-D-ribose 1-diphosphate: step 2/9. This chain is Phosphoribosyl-ATP pyrophosphatase, found in Pyrobaculum islandicum (strain DSM 4184 / JCM 9189 / GEO3).